The sequence spans 958 residues: Importin-13 (958 aa).

HEAT repeat units lie at residues 19–49, 51–83, 90–130, 137–174, 189–226, 231–263, 271–320, 325–367, 370–433, 435–471, 482–517, 519–553, 557–595, 598–643, 671–711, 715–749, 756–798, 810–840, 855–888, and 892–926; these read ENVEKALHQLYYDPNIENKNLAQKWLMQAQV, PQAWHFSWLLLNMDKVPEIQYSAPAPCTSRSPA, PDQY…LSMM, AVADMVRMFQAEDSNVDGRARCLALLELLTVLPEEFQT, LAQECGSVFPLLEQLLQQQDSPGFIKQKVLKCFSSWVQ, LMDCENLIQAAFTSLQDPELFDTAVEAVVNAIS, VNTL…ALLD, WQSF…DDIL, EPDK…YEML, AELLSSLYDKLGRLLTNTEQPSTWQHTEALLYGFQSI, VVPGLIGLIPRISISNVQLADTVMFTIGALSEWLAD, PVMINNVLPLVLQALGNPELSISSVSTLKKICREC, LPPYAANIVAVSQEVLMKQIHKTSQCMWLMQALGFLLSA, VEEI…SNLF, PVVV…VKTL, FAPMVPQLCEMLGQMYSTIPQASAIDLTRQLVHIF, FPPI…ALKR, VKALFHCGVLSLKFPEAPTVKASCGFFTELL, ENGKVLLQAVLEGVGGQASRSLMDHFAEILFALN, and FSYLSIWIKEAMQQDGFPSARVSPEQKETFSQQIL. Residues 40 to 106 form the Importin N-terminal domain; the sequence is AQKWLMQAQV…KSQLFTHITR (67 aa).

It belongs to the importin beta family.

It is found in the cytoplasm. The protein resides in the nucleus. Functions in nuclear protein import as nuclear transport receptor. Serves as receptor for nuclear localization signals (NLS) in cargo substrates. Is thought to mediate docking of the importin/substrate complex to the nuclear pore complex (NPC) through binding to nucleoporin and the complex is subsequently translocated through the pore by an energy requiring, Ran-dependent mechanism. At the nucleoplasmic side of the NPC, Ran binds to the importin, the importin/substrate complex dissociates and importin is re-exported from the nucleus to the cytoplasm where GTP hydrolysis releases Ran. The directionality of nuclear import is thought to be conferred by an asymmetric distribution of the GTP- and GDP-bound forms of Ran between the cytoplasm and nucleus. This chain is Importin-13 (IPO13), found in Gallus gallus (Chicken).